Reading from the N-terminus, the 352-residue chain is Protein-glutamate methylesterase/protein-glutamine glutaminase (352 aa).

The Response regulatory domain occupies 5 to 122 (RAIVIDDSAF…SLDIRNVEDE (118 aa)). At D56 the chain carries 4-aspartylphosphate. Residues 163 to 352 (RSIVSIGTST…IPSLIVKQLT (190 aa)) form the CheB-type methylesterase domain. Active-site residues include S171, H198, and D294.

The protein belongs to the CheB family. Post-translationally, phosphorylated by CheA. Phosphorylation of the N-terminal regulatory domain activates the methylesterase activity.

It localises to the cytoplasm. The enzyme catalyses [protein]-L-glutamate 5-O-methyl ester + H2O = L-glutamyl-[protein] + methanol + H(+). It catalyses the reaction L-glutaminyl-[protein] + H2O = L-glutamyl-[protein] + NH4(+). In terms of biological role, involved in chemotaxis. Part of a chemotaxis signal transduction system that modulates chemotaxis in response to various stimuli. Catalyzes the demethylation of specific methylglutamate residues introduced into the chemoreceptors (methyl-accepting chemotaxis proteins or MCP) by CheR. Also mediates the irreversible deamidation of specific glutamine residues to glutamic acid. The chain is Protein-glutamate methylesterase/protein-glutamine glutaminase from Oceanobacillus iheyensis (strain DSM 14371 / CIP 107618 / JCM 11309 / KCTC 3954 / HTE831).